The chain runs to 226 residues: Large ribosomal subunit protein uL3 (226 aa).

Residues 135 to 150 (MSSQRASHGNSRSHNV) show a composition bias toward polar residues. The segment at 135–158 (MSSQRASHGNSRSHNVPGSIGMAQ) is disordered. Position 158 is an N5-methylglutamine (Gln-158).

This sequence belongs to the universal ribosomal protein uL3 family. Part of the 50S ribosomal subunit. Forms a cluster with proteins L14 and L19. In terms of processing, methylated by PrmB.

Functionally, one of the primary rRNA binding proteins, it binds directly near the 3'-end of the 23S rRNA, where it nucleates assembly of the 50S subunit. This Variovorax paradoxus (strain S110) protein is Large ribosomal subunit protein uL3.